Consider the following 435-residue polypeptide: Tol-Pal system protein TolB (435 aa).

Residues 1–20 (MRKIIAGVFIFVFLISNLYA) form the signal peptide.

The protein belongs to the TolB family. In terms of assembly, the Tol-Pal system is composed of five core proteins: the inner membrane proteins TolA, TolQ and TolR, the periplasmic protein TolB and the outer membrane protein Pal. They form a network linking the inner and outer membranes and the peptidoglycan layer.

Its subcellular location is the periplasm. In terms of biological role, part of the Tol-Pal system, which plays a role in outer membrane invagination during cell division and is important for maintaining outer membrane integrity. This chain is Tol-Pal system protein TolB, found in Francisella tularensis subsp. tularensis (strain WY96-3418).